Here is a 452-residue protein sequence, read N- to C-terminus: MDAPARLLAPLLLLCAQQLRGTRAMNDIGDYVGSNLEISWLPNLDGLIAGYARNFRPGIGGPPVNVALALEVASIDHISEANMEYTMTVFLHQSWRDSRLSYNHTNETLGLDSRFVDKLWLPDTFIVNAKSAWFHDVTVENKLIRLQPDGVILYSIRITSTVACDMDLAKYPMDEQECMLDLESYGYSSEDIVYYWSESQEHIHGLDKLQLAQFTITSYRFTTELMNFKSAGQFPRLSLHFHLRRNRGVYIIQSYMPSVLLVAMSWVSFWISQAAVPARVSLGITTVLTMTTLMVSARSSLPRASAIKALDVYFWICYVFVFAALVEYAFAHFNADYRKKQKAKVKVSRPRAEMDVRNAIVLFSLSAAGVTQELAISRRQRRVPGNLMGSYRSVGVETGETKKEGAARSGGQGGIRARLRPIDADTIDIYARAVFPAAFAAVNVIYWAAYAM.

Positions 1 to 24 (MDAPARLLAPLLLLCAQQLRGTRA) are cleaved as a signal peptide. The Extracellular segment spans residues 25–251 (MNDIGDYVGS…HLRRNRGVYI (227 aa)). N-linked (GlcNAc...) asparagine glycans are attached at residues Asn-103 and Asn-106. A disulfide bridge connects residues Cys-164 and Cys-178. Residues 252-271 (IQSYMPSVLLVAMSWVSFWI) form a helical membrane-spanning segment. Residues 272 to 275 (SQAA) lie on the Cytoplasmic side of the membrane. A helical transmembrane segment spans residues 276–298 (VPARVSLGITTVLTMTTLMVSAR). At 299–308 (SSLPRASAIK) the chain is on the extracellular side. Residues 309–331 (ALDVYFWICYVFVFAALVEYAFA) form a helical membrane-spanning segment. Residues 332–426 (HFNADYRKKQ…ARLRPIDADT (95 aa)) are Cytoplasmic-facing. The residue at position 390 (Ser-390) is a Phosphoserine. Residues 427–449 (IDIYARAVFPAAFAAVNVIYWAA) traverse the membrane as a helical segment. Topologically, residues 450-452 (YAM) are extracellular.

It belongs to the ligand-gated ion channel (TC 1.A.9) family. Gamma-aminobutyric acid receptor (TC 1.A.9.5) subfamily. GABRD sub-subfamily. Heteropentamer, formed by a combination of alpha (GABRA1-6), beta (GABRB1-3), gamma (GABRG1-3), delta (GABRD), epsilon (GABRE), rho (GABRR1-3), pi (GABRP) and theta (GABRQ) chains, each subunit exhibiting distinct physiological and pharmacological properties.

The protein resides in the cell membrane. It catalyses the reaction chloride(in) = chloride(out). Functionally, delta subunit of the heteropentameric ligand-gated chloride channel gated by gamma-aminobutyric acid (GABA), a major inhibitory neurotransmitter in the brain. GABA-gated chloride channels, also named GABA(A) receptors (GABAAR), consist of five subunits arranged around a central pore and contain GABA active binding site(s) located at the alpha and beta subunit interface(s). When activated by GABA, GABAARs selectively allow the flow of chloride anions across the cell membrane down their electrochemical gradient. GABAARs containing delta/GABRD subunits are predominantly located in extrasynaptic or perisynaptic positions on hippocampus and cerebellar granule cells, and contribute to the tonic GABAergic inhibition. GABAAR containing alpha-4-beta-3-delta subunits can simultaneously bind GABA and histamine where histamine binds at the interface of two neighboring beta subunits, which may be involved in the regulation of sleep and wakefulness. In Homo sapiens (Human), this protein is Gamma-aminobutyric acid receptor subunit delta.